The chain runs to 346 residues: Holliday junction branch migration complex subunit RuvB (346 aa).

The tract at residues 1–182 (MSERLVTSNE…FGVLCSMEYY (182 aa)) is large ATPase domain (RuvB-L). ATP contacts are provided by residues Leu-21, Arg-22, Gly-63, Lys-66, Thr-67, Thr-68, 129-131 (EDY), Arg-172, Tyr-182, and Arg-219. A Mg(2+)-binding site is contributed by Thr-67. The small ATPAse domain (RuvB-S) stretch occupies residues 183-253 (TDEQLKEIII…AAKKSLEILE (71 aa)). The tract at residues 256-346 (GEGFDRIDNK…DSKQCTLFEK (91 aa)) is head domain (RuvB-H). The DNA site is built by Arg-311 and Arg-316.

This sequence belongs to the RuvB family. In terms of assembly, homohexamer. Forms an RuvA(8)-RuvB(12)-Holliday junction (HJ) complex. HJ DNA is sandwiched between 2 RuvA tetramers; dsDNA enters through RuvA and exits via RuvB. An RuvB hexamer assembles on each DNA strand where it exits the tetramer. Each RuvB hexamer is contacted by two RuvA subunits (via domain III) on 2 adjacent RuvB subunits; this complex drives branch migration. In the full resolvosome a probable DNA-RuvA(4)-RuvB(12)-RuvC(2) complex forms which resolves the HJ.

Its subcellular location is the cytoplasm. It carries out the reaction ATP + H2O = ADP + phosphate + H(+). Functionally, the RuvA-RuvB-RuvC complex processes Holliday junction (HJ) DNA during genetic recombination and DNA repair, while the RuvA-RuvB complex plays an important role in the rescue of blocked DNA replication forks via replication fork reversal (RFR). RuvA specifically binds to HJ cruciform DNA, conferring on it an open structure. The RuvB hexamer acts as an ATP-dependent pump, pulling dsDNA into and through the RuvAB complex. RuvB forms 2 homohexamers on either side of HJ DNA bound by 1 or 2 RuvA tetramers; 4 subunits per hexamer contact DNA at a time. Coordinated motions by a converter formed by DNA-disengaged RuvB subunits stimulates ATP hydrolysis and nucleotide exchange. Immobilization of the converter enables RuvB to convert the ATP-contained energy into a lever motion, pulling 2 nucleotides of DNA out of the RuvA tetramer per ATP hydrolyzed, thus driving DNA branch migration. The RuvB motors rotate together with the DNA substrate, which together with the progressing nucleotide cycle form the mechanistic basis for DNA recombination by continuous HJ branch migration. Branch migration allows RuvC to scan DNA until it finds its consensus sequence, where it cleaves and resolves cruciform DNA. The polypeptide is Holliday junction branch migration complex subunit RuvB (Clostridium perfringens (strain ATCC 13124 / DSM 756 / JCM 1290 / NCIMB 6125 / NCTC 8237 / Type A)).